A 101-amino-acid polypeptide reads, in one-letter code: Aspartyl/glutamyl-tRNA(Asn/Gln) amidotransferase subunit C (101 aa).

It belongs to the GatC family. Heterotrimer of A, B and C subunits.

It carries out the reaction L-glutamyl-tRNA(Gln) + L-glutamine + ATP + H2O = L-glutaminyl-tRNA(Gln) + L-glutamate + ADP + phosphate + H(+). The enzyme catalyses L-aspartyl-tRNA(Asn) + L-glutamine + ATP + H2O = L-asparaginyl-tRNA(Asn) + L-glutamate + ADP + phosphate + 2 H(+). Its function is as follows. Allows the formation of correctly charged Asn-tRNA(Asn) or Gln-tRNA(Gln) through the transamidation of misacylated Asp-tRNA(Asn) or Glu-tRNA(Gln) in organisms which lack either or both of asparaginyl-tRNA or glutaminyl-tRNA synthetases. The reaction takes place in the presence of glutamine and ATP through an activated phospho-Asp-tRNA(Asn) or phospho-Glu-tRNA(Gln). The protein is Aspartyl/glutamyl-tRNA(Asn/Gln) amidotransferase subunit C of Lactococcus lactis subsp. cremoris (strain MG1363).